The following is a 432-amino-acid chain: Amino-acid acetyltransferase (432 aa).

The N-acetyltransferase domain occupies 286–425; the sequence is EVVREASIED…ASLYNYQRNS (140 aa).

It belongs to the acetyltransferase family. ArgA subfamily.

Its subcellular location is the cytoplasm. It catalyses the reaction L-glutamate + acetyl-CoA = N-acetyl-L-glutamate + CoA + H(+). The protein operates within amino-acid biosynthesis; L-arginine biosynthesis; N(2)-acetyl-L-ornithine from L-glutamate: step 1/4. The protein is Amino-acid acetyltransferase of Pseudomonas putida (strain GB-1).